A 471-amino-acid polypeptide reads, in one-letter code: Methylenetetrahydrofolate--tRNA-(uracil-5-)-methyltransferase TrmFO (471 aa).

13–18 contacts FAD; the sequence is GGGLAG.

Belongs to the MnmG family. TrmFO subfamily. Requires FAD as cofactor.

The protein localises to the cytoplasm. The enzyme catalyses uridine(54) in tRNA + (6R)-5,10-methylene-5,6,7,8-tetrahydrofolate + NADH + H(+) = 5-methyluridine(54) in tRNA + (6S)-5,6,7,8-tetrahydrofolate + NAD(+). It catalyses the reaction uridine(54) in tRNA + (6R)-5,10-methylene-5,6,7,8-tetrahydrofolate + NADPH + H(+) = 5-methyluridine(54) in tRNA + (6S)-5,6,7,8-tetrahydrofolate + NADP(+). Its function is as follows. Catalyzes the folate-dependent formation of 5-methyl-uridine at position 54 (M-5-U54) in all tRNAs. This Azorhizobium caulinodans (strain ATCC 43989 / DSM 5975 / JCM 20966 / LMG 6465 / NBRC 14845 / NCIMB 13405 / ORS 571) protein is Methylenetetrahydrofolate--tRNA-(uracil-5-)-methyltransferase TrmFO.